The primary structure comprises 362 residues: Chorismate synthase (362 aa).

NADP(+) is bound at residue arginine 46. FMN is bound by residues 122–124 (RSS), 238–239 (NA), glycine 278, 293–297 (KPTPS), and arginine 319.

It belongs to the chorismate synthase family. As to quaternary structure, homotetramer. Requires FMNH2 as cofactor.

It carries out the reaction 5-O-(1-carboxyvinyl)-3-phosphoshikimate = chorismate + phosphate. It participates in metabolic intermediate biosynthesis; chorismate biosynthesis; chorismate from D-erythrose 4-phosphate and phosphoenolpyruvate: step 7/7. Functionally, catalyzes the anti-1,4-elimination of the C-3 phosphate and the C-6 proR hydrogen from 5-enolpyruvylshikimate-3-phosphate (EPSP) to yield chorismate, which is the branch point compound that serves as the starting substrate for the three terminal pathways of aromatic amino acid biosynthesis. This reaction introduces a second double bond into the aromatic ring system. The protein is Chorismate synthase of Campylobacter jejuni subsp. jejuni serotype O:6 (strain 81116 / NCTC 11828).